The primary structure comprises 78 residues: Large ribosomal subunit protein uL29 (78 aa).

It belongs to the universal ribosomal protein uL29 family.

The protein is Large ribosomal subunit protein uL29 of Rhodococcus erythropolis (strain PR4 / NBRC 100887).